The chain runs to 103 residues: Small ribosomal subunit protein uS10 (103 aa).

Belongs to the universal ribosomal protein uS10 family. As to quaternary structure, part of the 30S ribosomal subunit.

Its function is as follows. Involved in the binding of tRNA to the ribosomes. The protein is Small ribosomal subunit protein uS10 of Rubrobacter xylanophilus (strain DSM 9941 / JCM 11954 / NBRC 16129 / PRD-1).